We begin with the raw amino-acid sequence, 329 residues long: Vanillate O-demethylase oxygenase subunit (329 aa).

In terms of domain architecture, Rieske spans 1-84 (MICNERMVIY…AQERHGFIWV (84 aa)). The [2Fe-2S] cluster site is built by Cys24, His26, Cys43, and His46.

Belongs to the bacterial ring-hydroxylating dioxygenase alpha subunit family. In terms of assembly, this demethylase system consists of two proteins: an oxygenase and an oxygenase reductase. The cofactor is [2Fe-2S] cluster. Fe cation serves as cofactor.

It catalyses the reaction vanillate + NADH + O2 + H(+) = 3,4-dihydroxybenzoate + formaldehyde + NAD(+) + H2O. Its pathway is xenobiotic degradation; vanillyl-alcohol degradation. This is Vanillate O-demethylase oxygenase subunit (vanA) from Pseudomonas sp. (strain ATCC 19151).